Here is a 291-residue protein sequence, read N- to C-terminus: 4-hydroxy-tetrahydrodipicolinate synthase (291 aa).

T44 serves as a coordination point for pyruvate. Residue Y132 is the Proton donor/acceptor of the active site. K160 acts as the Schiff-base intermediate with substrate in catalysis. V202 is a pyruvate binding site.

The protein belongs to the DapA family. As to quaternary structure, homotetramer; dimer of dimers.

It localises to the cytoplasm. The catalysed reaction is L-aspartate 4-semialdehyde + pyruvate = (2S,4S)-4-hydroxy-2,3,4,5-tetrahydrodipicolinate + H2O + H(+). It functions in the pathway amino-acid biosynthesis; L-lysine biosynthesis via DAP pathway; (S)-tetrahydrodipicolinate from L-aspartate: step 3/4. Functionally, catalyzes the condensation of (S)-aspartate-beta-semialdehyde [(S)-ASA] and pyruvate to 4-hydroxy-tetrahydrodipicolinate (HTPA). This is 4-hydroxy-tetrahydrodipicolinate synthase from Clostridium perfringens (strain 13 / Type A).